The primary structure comprises 328 residues: MTRTNLITGFLGSGKTTSILHLLAHKDPNEKWAVLVNEFGEVGIDGALLADSGALLKEIPGGCMCCVNGLPMQVGLNTLLRQGKPDRLLIEPTGLGHPKQILDLLTAPVYEPWIDLRATLCILDPRLLLDEKSASNENFRDQLAAADIIVANKSDRTTPESEQALQRWWQQNGGDRQLIHSEHGKVDGHLLDLPRRNLAELPASAAHSHQHVVKKGLAALSLPEHQRWRRSLNSGQGYQACGWIFDADTVFDTIGILEWARLAPVERVKGVLRIPEGLVRINRQGDDLHIETQNVAPPDSRIELISSSEADWNALQSALLKLRLATTA.

A GTP-binding site is contributed by G9–T17. A CXCC motif motif is present at residues C63–C66. D155 lines the GTP pocket. The CobW C-terminal domain maps to C241 to K321.

This sequence belongs to the SIMIBI class G3E GTPase family. ZNG1 subfamily. As to quaternary structure, oligomerizes in the presence of Zn(2+).

The catalysed reaction is GTP + H2O = GDP + phosphate + H(+). With respect to regulation, GTPase activity is enhanced by Zn(2+) binding. Its function is as follows. Zinc chaperone that directly transfers zinc cofactor to target proteins, thereby activating them. Zinc is transferred from the CXCC motif in the GTPase domain to the zinc binding site in target proteins in a process requiring GTP hydrolysis. The protein is Zinc chaperone YeiR (yeiR) of Escherichia coli (strain K12).